A 406-amino-acid polypeptide reads, in one-letter code: Phosphoglycerate kinase (406 aa).

Substrate-binding positions include 22 to 24 (DLN), arginine 37, 60 to 63 (HLGN), arginine 119, and arginine 152. Residues lysine 202, glutamate 325, and 355–358 (GGDT) contribute to the ATP site.

It belongs to the phosphoglycerate kinase family. In terms of assembly, monomer.

Its subcellular location is the cytoplasm. The enzyme catalyses (2R)-3-phosphoglycerate + ATP = (2R)-3-phospho-glyceroyl phosphate + ADP. Its pathway is carbohydrate degradation; glycolysis; pyruvate from D-glyceraldehyde 3-phosphate: step 2/5. This chain is Phosphoglycerate kinase, found in Orientia tsutsugamushi (strain Ikeda) (Rickettsia tsutsugamushi).